Reading from the N-terminus, the 135-residue chain is Cilia- and flagella-associated protein 144 (135 aa).

A disordered region spans residues 76–100 (QGPKKKYSETQTEAQEIGWDPNPLI).

Belongs to the CFAP144 family. In terms of assembly, microtubule inner protein component of sperm flagellar doublet microtubules. As to expression, predominantly expressed in tissues containing motile cilia.

The protein localises to the cytoplasm. It is found in the cytoskeleton. Its subcellular location is the cilium axoneme. It localises to the flagellum axoneme. The chain is Cilia- and flagella-associated protein 144 from Mus musculus (Mouse).